We begin with the raw amino-acid sequence, 347 residues long: NADH-ubiquinone oxidoreductase chain 2 (347 aa).

11 helical membrane-spanning segments follow: residues 3-23, 25-45, 59-79, 96-116, 127-147, 148-168, 178-198, 201-221, 247-267, 276-296, and 325-345; these read PLIMSIILATIILGTTIVMTG, HWLMIWIGFEMNMLAIIPMLM, YFFTQATASMLLMLAGIINLM, IIMTLALAMKLGLAPFHFWVP, GLILLTWQKLASMTGLYMISP, GINLNMLMTMSMLSIAIGGWG, IMAYSSIAHMGWMTAILIYNP, TLLNLVIYILMTTTMFMLFMI, TLLSMGGLPPLMGFLPKWMII, IVLPTIMAITALLNLFFYMRL, and LLTPMIMMSTLTLPLAPMMMI.

It belongs to the complex I subunit 2 family. Core subunit of respiratory chain NADH dehydrogenase (Complex I) which is composed of 45 different subunits. Interacts with TMEM242.

The protein resides in the mitochondrion inner membrane. It carries out the reaction a ubiquinone + NADH + 5 H(+)(in) = a ubiquinol + NAD(+) + 4 H(+)(out). Functionally, core subunit of the mitochondrial membrane respiratory chain NADH dehydrogenase (Complex I) which catalyzes electron transfer from NADH through the respiratory chain, using ubiquinone as an electron acceptor. Essential for the catalytic activity and assembly of complex I. The polypeptide is NADH-ubiquinone oxidoreductase chain 2 (Ozimops beccarii (Beccari's free-tailed bat)).